The following is a 217-amino-acid chain: Small ribosomal subunit protein uS3 (217 aa).

A KH type-2 domain is found at 38-106 (IRQLIQTKLA…QVHINIVEIK (69 aa)).

The protein belongs to the universal ribosomal protein uS3 family. As to quaternary structure, part of the 30S ribosomal subunit. Forms a tight complex with proteins S10 and S14.

In terms of biological role, binds the lower part of the 30S subunit head. Binds mRNA in the 70S ribosome, positioning it for translation. The sequence is that of Small ribosomal subunit protein uS3 from Lactococcus lactis subsp. lactis (strain IL1403) (Streptococcus lactis).